The chain runs to 156 residues: Ribosomal RNA large subunit methyltransferase H (156 aa).

Residues Leu73, Gly104, and 123-128 contribute to the S-adenosyl-L-methionine site; that span reads LSPLTF.

The protein belongs to the RNA methyltransferase RlmH family. Homodimer.

It localises to the cytoplasm. It carries out the reaction pseudouridine(1915) in 23S rRNA + S-adenosyl-L-methionine = N(3)-methylpseudouridine(1915) in 23S rRNA + S-adenosyl-L-homocysteine + H(+). Specifically methylates the pseudouridine at position 1915 (m3Psi1915) in 23S rRNA. The chain is Ribosomal RNA large subunit methyltransferase H from Thioalkalivibrio sulfidiphilus (strain HL-EbGR7).